We begin with the raw amino-acid sequence, 531 residues long: UDP-glucuronosyltransferase 1A7 (531 aa).

An N-terminal signal peptide occupies residues 1 to 25 (MAPADFPASLPLCVCLLLASGLAQA). Residues Asn293 and Asn431 are each glycosylated (N-linked (GlcNAc...) asparagine). The helical transmembrane segment at 489–509 (VIGFLLAIVLTVVFIVFKCCA) threads the bilayer.

Belongs to the UDP-glycosyltransferase family. Homodimer. Homooligomer. Interacts with UGT1A1, UGT1A3, UGT1A4, UGT1A6, UGT1A8, UGT1A9 and UGT1A10 to form heterodimers. In terms of tissue distribution, widely expressed with highest levels detected in colon and kidney.

The protein localises to the endoplasmic reticulum membrane. It catalyses the reaction glucuronate acceptor + UDP-alpha-D-glucuronate = acceptor beta-D-glucuronoside + UDP + H(+). The catalysed reaction is 17alpha-estradiol + UDP-alpha-D-glucuronate = 17alpha-estradiol 3-O-(beta-D-glucuronate) + UDP + H(+). The enzyme catalyses prunetin + UDP-alpha-D-glucuronate = prunetin-5-O-beta-D-glucuronide + UDP. It carries out the reaction 5-epi-5-F2t-IsoP + UDP-alpha-D-glucuronate = 5-epi-5-F2t-IsoP-glucuronide + UDP + H(+). It catalyses the reaction (E)-ferulate + UDP-alpha-D-glucuronate = (E)-ferulic acid beta-D-glucuronate ester + UDP. The catalysed reaction is candesartan + UDP-alpha-D-glucuronate = candesartan O-beta-D-glucuronoside + UDP. The enzyme catalyses SN-38 + UDP-alpha-D-glucuronate = SN-38 O-beta-D-glucuronide + UDP + H(+). It carries out the reaction mycophenolate + UDP-alpha-D-glucuronate = mycophenolate 7-O-beta-D-glucuronide + UDP + H(+). Functionally, UDP-glucuronosyltransferase (UGT) that catalyzes phase II biotransformation reactions in which lipophilic substrates are conjugated with glucuronic acid to increase the metabolite's water solubility, thereby facilitating excretion into either the urine or bile. Essential for the elimination and detoxification of drugs, xenobiotics and endogenous compounds. Catalyzes the glucuronidation of endogenous estrogen hormone epiestradiol. Involved in the glucuronidation of F2-isoprostane (5-epi-5-F2t-IsoP). Involved in the glucuronidation of the phytochemical ferulic acid at the carboxylic acid group. Also catalyzes the glucuronidation of the isoflavones genistein, daidzein, glycitein, formononetin, biochanin A and prunetin, which are phytoestrogens with anticancer and cardiovascular properties. Involved in the glucuronidation of the AGTR1 angiotensin receptor antagonist caderastan, a drug which can inhibit the effect of angiotensin II. Involved in the biotransformation of 7-ethyl-10-hydroxycamptothecin (SN-38), the pharmacologically active metabolite of the anticancer drug irinotecan. Also metabolizes mycophenolate, an immunosuppressive agent. This chain is UDP-glucuronosyltransferase 1A7, found in Mus musculus (Mouse).